The following is a 564-amino-acid chain: Beta-catenin-like protein 1 homolog (564 aa).

The disordered stretch occupies residues 1 to 56 (MDVDSIFKNTEETNKKRNPEEADSLEPASSRRRLAEENSDEENEEFDEEGGRFFGS). Basic and acidic residues predominate over residues 9–20 (NTEETNKKRNPE). The segment covering 37–48 (ENSDEENEEFDE) has biased composition (acidic residues). Position 39 is a phosphoserine (Ser-39). 2 HEAT repeats span residues 83 to 133 (PTEL…VLSE) and 138 to 177 (IPIF…DEDV). ARM repeat units lie at residues 179–229 (PDAL…LLSV), 230–276 (DNSI…LANS), 277–326 (KEAK…LVQE), 328–366 (KGKS…LLFG), and 367–411 (PLST…LFRS). Residues 465-528 (EKSTKWFLQQ…DALKNYHENL (64 aa)) are a coiled coil.

Its subcellular location is the nucleus. In terms of biological role, probable spliceosomal component involved in the activation of pre-mRNA splicing. The chain is Beta-catenin-like protein 1 homolog (ctnnbl1) from Schizosaccharomyces pombe (strain 972 / ATCC 24843) (Fission yeast).